A 710-amino-acid polypeptide reads, in one-letter code: MNQELLSVGSKRRRTGGSLRGNASSSQVDEGQMNRVVEEDPQQQARHQEEEHTARNGELVGANPRPGDQNDTQQGQVEENNNRFISVDEDSSGNQEEQEEDEEHAGEQEEEEEEEEEEEEMDQESDDFDPSDDSSREDEHTHNSNVTNCSSVSDLPAHQLSSPFYTKTTKMKRKLDHGSEVRSFSLGKKPCKVSDYTSTTGLVPCSATPTTFGDLRAANGQGQQRRRITSVQPPTGLQEWLKMFQSWSGPEKLLALDELIDSCEPTQVKHMMQVIEPQFQRDFISLLPKELALYVLSFLEPKDLLQAAQTCRYWRILAEDNLLWREKCKEEGIDEPLHIKRRKIIKPGFIHSPWKSAYIRQHRIDTNWRRGELKSPKVLKGHDDHVITCLQFCGNRIVSGSDDNTLKVWSAVTGKCLRTLVGHTGGVWSSQMRDNIIISGSTDRTLKVWNAETGECIHTLYGHTSTVRCMHLHEKRVVSGSRDATLRVWDIETGQCLHVLMGHVAAVRCVQYDGRRVVSGAYDFMVKVWDPETETCLHTLQGHTNRVYSLQFDGIHVVSGSLDTSIRVWDVETGNCIHTLTGHQSLTSGMELKDNILVSGNADSTVKIWDIKTGQCLQTLQGPSKHQSAVTCLQFNKNFVITSSDDGTVKLWDLKTGEFIRNLVTLESGGSGGVVWRIRASNTKLVCAVGSRNGTEETKLLVLDFDVDMK.

The disordered stretch occupies residues 1 to 158; sequence MNQELLSVGS…CSSVSDLPAH (158 aa). S26 bears the Phosphoserine mark. Over residues 46–55 the composition is skewed to basic and acidic residues; sequence RHQEEEHTAR. Polar residues predominate over residues 69–84; it reads QNDTQQGQVEENNNRF. Acidic residues predominate over residues 87–132; it reads VDEDSSGNQEEQEEDEEHAGEQEEEEEEEEEEEEMDQESDDFDPSD. Residues 133 to 142 are compositionally biased toward basic and acidic residues; that stretch reads DSSREDEHTH. Residues 143 to 158 show a composition bias toward polar residues; that stretch reads NSNVTNCSSVSDLPAH. T208 carries the post-translational modification Phosphothreonine. S230 is subject to Phosphoserine; by SGK1. The F-box domain maps to 281–327; that stretch reads RDFISLLPKELALYVLSFLEPKDLLQAAQTCRYWRILAEDNLLWREK. WD repeat units follow at residues 381-421, 423-459, 462-501, 503-539, 542-581, 583-621, and 625-662; these read GHDD…RTLV, HTGGVWSSQMRDNIIISGSTDRTLKVWNAETGECIHT, GHTSTVRCMHLHEKRVVSGSRDATLRVWDIETGQCLHVLM, HVAAVRCVQYDGRRVVSGAYDFMVKVWDPETETCLHT, GHTNRVYSLQFDGIHVVSGSLDTSIRVWDVETGNCIHTLT, HQSLTSGMELKDNILVSGNADSTVKIWDIKTGQCLQTLQ, and KHQSAVTCLQFNKNFVITSSDDGTVKLWDLKTGEFIRN.

In terms of assembly, homodimer; homodimerization plays a role in substrate binding and/or ubiquitination and degradation. Component of the SCF(FBXW7) complex consisting of CUL1, RBX1, SKP1 and FBXW7. Interacts (via F-box domain) with SKP1. Interacts (via F-box domain) with pseudophosphatase STYX; the interaction is direct and prevents FBXW7 interaction with SKP1. Interacts with cyclin-E (CCNE1 or CCNE2). Interacts with PSEN1. Forms a trimeric complex with NOTCH1 and SGK1. Interacts with NOTCH1 intracellular domain/NICD and NOTCH4 intracellular domain/NICD. Interacts with NOTCH2 intracellular domain (N2ICD). Interacts with MYC (when phosphorylated). Interacts with USP28, counteracting ubiquitination of MYC. Interacts (when phosphorylated at Thr-208) with PIN1, disrupting FBXW7 dimerization and promoting FBXW7 autoubiquitination and degradation. Interacts with UBE2QL1. Interacts with FAM83D; promotes FBXW7 degradation. Interacts with MYCN; FBXW7 competes with AURKA for binding to unphosphorylated MYCN but not for binding to phosphorylated MYCN. Interacts with JUN. Found in a complex with JUN and PRR7. Interacts with JUN and PRR7; the interaction inhibits ubiquitination-mediated JUN degradation, promoting its phosphorylation and transcriptional activity. Interacts with NFE2L1. Interacts with NR1D1. Interacts with RICTOR; mediates RICTOR ubiquitination and degradation. Interacts with USP38, counteracting ubiquitination of MYC. Phosphorylation at Thr-208 promotes interaction with PIN1, leading to disrupt FBXW7 dimerization and promoting FBXW7 autoubiquitination and degradation. Phosphorylated by ATM at Ser-26 in response to DNA damage, promoting recruitment to DNA damage sites and 'Lys-63'-linked ubiquitination of phosphorylated XRCC4. In terms of processing, ubiquitinated: autoubiquitinates following phosphorylation at Thr-208 and subsequent interaction with PIN1. Ubiquitination leads to its proteasomal degradation. Widely expressed with highest levels in brain, heart and testis.

The protein resides in the nucleus. Its subcellular location is the nucleoplasm. The protein localises to the chromosome. The protein operates within protein modification; protein ubiquitination. Substrate recognition component of a SCF (SKP1-CUL1-F-box protein) E3 ubiquitin-protein ligase complex which mediates the ubiquitination and subsequent proteasomal degradation of target proteins. Recognizes and binds phosphorylated sites/phosphodegrons within target proteins and thereafter brings them to the SCF complex for ubiquitination. Mediates ubiquitination and subsequent degradation of CCNE1 and MYC. Identified substrates include cyclin-E (CCNE1 or CCNE2), DISC1, JUN, MYC, NOTCH1 released notch intracellular domain (NICD), NOTCH2, MCL1, MLST8, RICTOR and probably PSEN1. Acts as a negative regulator of JNK signaling by binding to phosphorylated JUN and promoting its ubiquitination and subsequent degradation. SCF(FBXW7) complex mediates the ubiquitination and subsequent degradation of NFE2L1. Involved in bone homeostasis and negative regulation of osteoclast differentiation. Regulates the amplitude of the cyclic expression of hepatic core clock genes and genes involved in lipid and glucose metabolism via ubiquitination and proteasomal degradation of their transcriptional repressor NR1D1; CDK1-dependent phosphorylation of NR1D1 is necessary for SCF(FBXW7)-mediated ubiquitination. Also able to promote 'Lys-63'-linked ubiquitination in response to DNA damage. The SCF(FBXW7) complex facilitates double-strand break repair following phosphorylation by ATM: phosphorylation promotes localization to sites of double-strand breaks and 'Lys-63'-linked ubiquitination of phosphorylated XRCC4, enhancing DNA non-homologous end joining. The polypeptide is F-box/WD repeat-containing protein 7 (Mus musculus (Mouse)).